We begin with the raw amino-acid sequence, 317 residues long: Protoheme IX farnesyltransferase (317 aa).

6 helical membrane passes run 25–45 (FFALLKPRVMALVVFTALVGM), 54–74 (PVIGAVSLLMIAVGAGASGCL), 117–137 (LMLGLAANWLAAGLLAFTIVF), 167–189 (IGQAVVTGSVGIEGIILFLIIFI), 244–264 (LGFGGLIYGLVALLGGLAMLV), and 281–301 (AAMSLFGFSILYLFLLFSALL).

This sequence belongs to the UbiA prenyltransferase family. Protoheme IX farnesyltransferase subfamily.

Its subcellular location is the cell inner membrane. It catalyses the reaction heme b + (2E,6E)-farnesyl diphosphate + H2O = Fe(II)-heme o + diphosphate. It participates in porphyrin-containing compound metabolism; heme O biosynthesis; heme O from protoheme: step 1/1. In terms of biological role, converts heme B (protoheme IX) to heme O by substitution of the vinyl group on carbon 2 of heme B porphyrin ring with a hydroxyethyl farnesyl side group. The sequence is that of Protoheme IX farnesyltransferase from Methylobacterium nodulans (strain LMG 21967 / CNCM I-2342 / ORS 2060).